The following is a 337-amino-acid chain: tRNA N6-adenosine threonylcarbamoyltransferase (337 aa).

Residues His-111 and His-115 each contribute to the Fe cation site. Substrate-binding positions include 134–138, Asp-167, Gly-180, and Asn-272; that span reads LVSGG. Asp-300 serves as a coordination point for Fe cation.

It belongs to the KAE1 / TsaD family. Fe(2+) serves as cofactor.

The protein localises to the cytoplasm. It catalyses the reaction L-threonylcarbamoyladenylate + adenosine(37) in tRNA = N(6)-L-threonylcarbamoyladenosine(37) in tRNA + AMP + H(+). In terms of biological role, required for the formation of a threonylcarbamoyl group on adenosine at position 37 (t(6)A37) in tRNAs that read codons beginning with adenine. Is involved in the transfer of the threonylcarbamoyl moiety of threonylcarbamoyl-AMP (TC-AMP) to the N6 group of A37, together with TsaE and TsaB. TsaD likely plays a direct catalytic role in this reaction. The polypeptide is tRNA N6-adenosine threonylcarbamoyltransferase (Enterobacter sp. (strain 638)).